A 253-amino-acid chain; its full sequence is Small ribosomal subunit protein uS5 (253 aa).

The segment at 1–30 (MAESAPRGFGRGGRGGRGRGRGRRGAKRDE) is disordered. A compositionally biased stretch (basic residues) spans 14–26 (RGGRGRGRGRRGA). In terms of domain architecture, S5 DRBM spans 75–138 (LNDEVMKVVP…IMGKLSIMPI (64 aa)).

It belongs to the universal ribosomal protein uS5 family. In terms of assembly, component of the small ribosomal subunit (SSU). Mature yeast ribosomes consist of a small (40S) and a large (60S) subunit. The 40S small subunit contains 1 molecule of ribosomal RNA (18S rRNA) and at least 33 different proteins. The large 60S subunit contains 3 rRNA molecules (25S, 5.8S and 5S rRNA) and at least 46 different proteins. Interacts with snoRNA U3. Interacts with MPP10. Component of the ribosomal small subunit (SSU) processome composed of at least 40 protein subunits and snoRNA U3.

It is found in the cytoplasm. Its function is as follows. Component of the ribosome, a large ribonucleoprotein complex responsible for the synthesis of proteins in the cell. The small ribosomal subunit (SSU) binds messenger RNAs (mRNAs) and translates the encoded message by selecting cognate aminoacyl-transfer RNA (tRNA) molecules. The large subunit (LSU) contains the ribosomal catalytic site termed the peptidyl transferase center (PTC), which catalyzes the formation of peptide bonds, thereby polymerizing the amino acids delivered by tRNAs into a polypeptide chain. The nascent polypeptides leave the ribosome through a tunnel in the LSU and interact with protein factors that function in enzymatic processing, targeting, and the membrane insertion of nascent chains at the exit of the ribosomal tunnel. Plays a role in the assembly and function of the 40S ribosomal subunit. Mutations in this protein affects the control of translational fidelity. Involved in nucleolar processing of pre-18S ribosomal RNA and ribosome assembly. Component of the ribosome, a large ribonucleoprotein complex responsible for the synthesis of proteins in the cell. The small ribosomal subunit (SSU) binds messenger RNAs (mRNAs) and translates the encoded message by selecting cognate aminoacyl-transfer RNA (tRNA) molecules. The large subunit (LSU) contains the ribosomal catalytic site termed the peptidyl transferase center (PTC), which catalyzes the formation of peptide bonds, thereby polymerizing the amino acids delivered by tRNAs into a polypeptide chain. The nascent polypeptides leave the ribosome through a tunnel in the LSU and interact with protein factors that function in enzymatic processing, targeting, and the membrane insertion of nascent chains at the exit of the ribosomal tunnel. uS5 is important for the assembly and function of the 40S ribosomal subunit. Mutations in this protein affects the control of translational fidelity. Involved in nucleolar processing of pre-18S ribosomal RNA and ribosome assembly. This Schizosaccharomyces pombe (strain 972 / ATCC 24843) (Fission yeast) protein is Small ribosomal subunit protein uS5 (rps2).